The primary structure comprises 231 residues: Ribose-5-phosphate isomerase A (231 aa).

Substrate contacts are provided by residues 32–35 (TGST), 85–88 (DGAD), and 98–101 (KGGG). Residue Glu107 is the Proton acceptor of the active site. A substrate-binding site is contributed by Lys125.

The protein belongs to the ribose 5-phosphate isomerase family. As to quaternary structure, homodimer.

The enzyme catalyses aldehydo-D-ribose 5-phosphate = D-ribulose 5-phosphate. It participates in carbohydrate degradation; pentose phosphate pathway; D-ribose 5-phosphate from D-ribulose 5-phosphate (non-oxidative stage): step 1/1. Functionally, catalyzes the reversible conversion of ribose-5-phosphate to ribulose 5-phosphate. The chain is Ribose-5-phosphate isomerase A from Burkholderia mallei (strain NCTC 10247).